The primary structure comprises 102 residues: Large ribosomal subunit protein uL23 (102 aa).

This sequence belongs to the universal ribosomal protein uL23 family. In terms of assembly, part of the 50S ribosomal subunit. Contacts protein L29, and trigger factor when it is bound to the ribosome.

In terms of biological role, one of the early assembly proteins it binds 23S rRNA. One of the proteins that surrounds the polypeptide exit tunnel on the outside of the ribosome. Forms the main docking site for trigger factor binding to the ribosome. The chain is Large ribosomal subunit protein uL23 from Cutibacterium acnes (strain DSM 16379 / KPA171202) (Propionibacterium acnes).